A 206-amino-acid chain; its full sequence is MFEDRPDRDAEVVLVGRSNVGKSTLMRELTGHDFSTGGKPGVTRQPNHFDWASESFMFTDLPGFGFMSGVEEEHREAIKTNIVRYLEENADSILAGVVVMDGKAAVDIIDRHAERGNIPHDVEMFGFLEDVGVEPIVAVNKTDKIDDLDERLDEICDRLGLYPPWQQWSDQIAPICAKRGDIEALEECLRTRFHEHNRDDLLKFVS.

The EngB-type G domain maps to 8 to 195 (RDAEVVLVGR…EECLRTRFHE (188 aa)). GTP contacts are provided by residues 16-23 (GRSNVGKS), 41-45 (GVTRQ), 60-63 (DLPG), 140-143 (NKTD), and 175-177 (ICA). Residues S23 and T43 each coordinate Mg(2+).

This sequence belongs to the TRAFAC class TrmE-Era-EngA-EngB-Septin-like GTPase superfamily. EngB GTPase family. It depends on Mg(2+) as a cofactor.

Necessary for normal cell division and for the maintenance of normal septation. The sequence is that of Probable GTP-binding protein EngB from Halorubrum lacusprofundi (strain ATCC 49239 / DSM 5036 / JCM 8891 / ACAM 34).